Consider the following 83-residue polypeptide: Arminin 4364 (83 aa).

Residues 1 to 18 (MKTVFAILFLAFIALTYA) form the signal peptide. The propeptide occupies 19 to 55 (RSYEDVKEEIKNEVEKEILEDLEKETDELNERKINDA). The residue at position 80 (Val80) is a Valine amide.

This sequence belongs to the arminin family. As to expression, expressed in entodermal epithelium along the body column.

The protein localises to the secreted. It localises to the target cell membrane. In terms of biological role, antimicrobial peptide with a broad-spectrum antimicrobial activity. Keeps its antibacterial activity under a wide range of salt concentrations that mimic physiological conditions of human blood, which is surprising, since Hydra is an obligate freshwater animal with nearly no salt tolerance. Does not affect red blood cells. In Hydra vulgaris (Hydra), this protein is Arminin 4364.